The chain runs to 83 residues: EVPANAVTESDPTAVALKYHRNAEASERVAAARPGLPPEEQHCENCQFMLPDQGADEWRGCSLFPGKLINLDGWCASWTLRAG.

[4Fe-4S] cluster is bound by residues C43, C46, C61, and C75.

This sequence belongs to the high-potential iron-sulfur protein (HiPIP) family. In terms of assembly, homodimer.

The protein localises to the periplasm. Specific class of high-redox-potential 4Fe-4S ferredoxins. Functions in anaerobic electron transport in most purple and in some other photosynthetic bacteria and in at least one genus (Paracoccus) of halophilic, denitrifying bacteria. In Marichromatium gracile (Chromatium gracile), this protein is High-potential iron-sulfur protein (hip).